The primary structure comprises 335 residues: Ethanol acetyltransferase 1 (335 aa).

The AB hydrolase-1 domain maps to 48–300 (PIVFVHGIFG…NSAHDILDQR (253 aa)). Residues Ser-121, Asp-145, and His-294 each act as charge relay system in the active site.

This sequence belongs to the AB hydrolase superfamily.

It is found in the mitochondrion. The enzyme catalyses ethanol + acetyl-CoA = ethyl acetate + CoA. It carries out the reaction acetyl-CoA + H2O = acetate + CoA + H(+). The catalysed reaction is ethyl acetate + H2O = ethanol + acetate + H(+). Functionally, alcohol acetyltransferase that catalyzes the synthesis of ethyl acetate from ethanol and acetyl-CoA. Can also function as a thioesterase by hydrolyzing acetyl-CoA in the absence of ethanol, as well as esterase hydrolyzing ethyl acetate. This is Ethanol acetyltransferase 1 (EAT1) from Cyberlindnera fabianii (Yeast).